The sequence spans 277 residues: MIILIYLFLLLWEDTQGWGFKDGIFHNSIWLERAAGVYHREARSGKYKLTYAEAKAVCEFEGGHLATYKQLEAARKIGFHVCAAGWMAKGRVGYPIVKPGPNCGFGKTGIIDYGIRLNRSERWDAYCYNPHAKECGGVFTDPKQIFKSPGFPNEYEDNQICYWHIRLKYGQRIHLSFLDFDLEDDPGCLADYVEIYDSYDDVHGFVGRYCGDELPDDIISTGNVMTLKFLSDASVTAGGFQIKYVAMDPVSKSSQGKNTSTTSTGNKNFLAGRFSHL.

The signal sequence occupies residues 1 to 17 (MIILIYLFLLLWEDTQG). Positions 36–129 (GVYHREARSG…SERWDAYCYN (94 aa)) constitute a Link domain. 3 disulfides stabilise this stretch: C58–C127, C82–C103, and C135–C161. N118 is a glycosylation site (N-linked (GlcNAc...) asparagine). The CUB domain maps to 135–247 (CGGVFTDPKQ…GGFQIKYVAM (113 aa)). 5 residues coordinate Ca(2+): E183, D191, D232, S234, and V235. C188 and C210 are disulfide-bonded. N258 carries N-linked (GlcNAc...) asparagine glycosylation.

In terms of assembly, interacts (via Link domain) with inter-alpha-inhibitor (I-alpha-I) component bikunin. Interacts with ITIH2/HC2; this interaction is required for transesterification of the HC to hyaluronan. Interacts (via Link and CUB domains) with ITIH1. Chondroitin sulfate may be required for the stability of the complex. Interacts (via Link domain) with various C-X-C and C-C chemokines including PF4, CXCL8, CXCL11, CXCL12, CCL2, CCL7, CCL19, CCL21, and CCL27; this interaction interferes with chemokine binding to glycosaminoglycans. Interacts (primarily via Link domain) with BMP2; this interaction is inhibited by hyaluronan. Interacts (via both Link and CUB domains) with TNFSF11. Interacts (via CUB domain) with FN1 (via type III repeats 9-14); this interaction enhances fibronectin fibril assembly. TNFAIP6 may act as a bridging molecule between FN1 and THBS1. N-glycosylated. In terms of tissue distribution, expressed in airway epithelium and submucosal gland (at protein level). Colocalizes with bikunin at the ciliary border. Present in bronchoalveolar lavage fluid (at protein level). Expressed in mesenchymal stem cells. Found in the synovial fluid of patients with rheumatoid arthritis.

It is found in the secreted. Its function is as follows. Major regulator of extracellular matrix organization during tissue remodeling. Catalyzes the transfer of a heavy chain (HC) from inter-alpha-inhibitor (I-alpha-I) complex to hyaluronan. Cleaves the ester bond between the C-terminus of the HC and GalNAc residue of the chondroitin sulfate chain in I-alpha-I complex followed by transesterification of the HC to hyaluronan. In the process, potentiates the antiprotease function of I-alpha-I complex through release of free bikunin. Acts as a catalyst in the formation of hyaluronan-HC oligomers and hyaluronan-rich matrix surrounding the cumulus cell-oocyte complex, a necessary step for oocyte fertilization. Assembles hyaluronan in pericellular matrices that serve as platforms for receptor clustering and signaling. Enables binding of hyaluronan deposited on the surface of macrophages to LYVE1 on lymphatic endothelium and facilitates macrophage extravasation. Alters hyaluronan binding to functionally latent CD44 on vascular endothelium, switching CD44 into an active state that supports leukocyte rolling. Modulates the interaction of chemokines with extracellular matrix components and proteoglycans on endothelial cell surface, likely preventing chemokine gradient formation. In a negative feedback mechanism, may limit excessive neutrophil recruitment at inflammatory sites by antagonizing the association of CXCL8 with glycosaminoglycans on vascular endothelium. Has a role in osteogenesis and bone remodeling. Inhibits BMP2-dependent differentiation of mesenchymal stem cell to osteoblasts. Protects against bone erosion during inflammation by inhibiting TNFSF11/RANKL-dependent osteoclast activation. This chain is Tumor necrosis factor-inducible gene 6 protein (TNFAIP6), found in Homo sapiens (Human).